A 255-amino-acid polypeptide reads, in one-letter code: Small ribosomal subunit protein eS1 (255 aa).

Residues M1–K18 show a composition bias toward basic residues. Residues M1–D28 are disordered. N-acetylalanine; partial is present on A2. Basic and acidic residues predominate over residues R19 to D28.

The protein belongs to the eukaryotic ribosomal protein eS1 family. As to quaternary structure, component of the small ribosomal subunit. Mature ribosomes consist of a small (40S) and a large (60S) subunit. The 40S subunit contains about 33 different proteins and 1 molecule of RNA (18S). The 60S subunit contains about 49 different proteins and 3 molecules of RNA (25S, 5.8S and 5S).

The protein resides in the cytoplasm. This is Small ribosomal subunit protein eS1 from Ajellomyces dermatitidis (strain ER-3 / ATCC MYA-2586) (Blastomyces dermatitidis).